The sequence spans 377 residues: Chaperone protein DnaJ (377 aa).

A J domain is found at 5 to 70 (DYYEILGVER…EKRAAYDQYG (66 aa)). The CR-type zinc finger occupies 134 to 212 (GITKDIQIQT…CHGDGRVHKT (79 aa)). Positions 147, 150, 164, 167, 186, 189, 200, and 203 each coordinate Zn(2+). CXXCXGXG motif repeat units lie at residues 147–154 (CDHCNGSG), 164–171 (CPTCHGHG), 186–193 (CPHCHGTG), and 200–207 (CKKCHGDG).

It belongs to the DnaJ family. In terms of assembly, homodimer. It depends on Zn(2+) as a cofactor.

It is found in the cytoplasm. Participates actively in the response to hyperosmotic and heat shock by preventing the aggregation of stress-denatured proteins and by disaggregating proteins, also in an autonomous, DnaK-independent fashion. Unfolded proteins bind initially to DnaJ; upon interaction with the DnaJ-bound protein, DnaK hydrolyzes its bound ATP, resulting in the formation of a stable complex. GrpE releases ADP from DnaK; ATP binding to DnaK triggers the release of the substrate protein, thus completing the reaction cycle. Several rounds of ATP-dependent interactions between DnaJ, DnaK and GrpE are required for fully efficient folding. Also involved, together with DnaK and GrpE, in the DNA replication of plasmids through activation of initiation proteins. This is Chaperone protein DnaJ from Actinobacillus succinogenes (strain ATCC 55618 / DSM 22257 / CCUG 43843 / 130Z).